We begin with the raw amino-acid sequence, 568 residues long: Probable inactive poly [ADP-ribose] polymerase SRO1 (568 aa).

The segment covering 1–18 has biased composition (basic and acidic residues); sequence MEAKIVKVSDSSYKDGLG. The tract at residues 1–32 is disordered; it reads MEAKIVKVSDSSYKDGLGKKRKHPGNYTPYDS. The 76-residue stretch at 77–152 folds into the WWE domain; that stretch reads RYFSYYKKTG…ETGVKTQLAW (76 aa). 2 disordered regions span residues 220 to 241 and 453 to 500; these read DFQA…DSCS and ILPT…RRPR. Residues 245–463 enclose the PARP catalytic domain; that stretch reads DDAVEKWDKT…LPTTQSRHES (219 aa). An RST domain is found at 497-568; it reads RRPRSPIMPF…TITGLQRSLG (72 aa).

As to quaternary structure, interacts with DREB2A, DREB2B, DREB2C and NAC082. Expressed in young developing tissues, such as young leaves and flowers and root tips. In mature plants, expressed in vasculature of leaves and roots.

The protein resides in the nucleus matrix. In terms of biological role, probable inactive ADP-ribosyltransferase that functions with RCD1 to regulate oxidative stress, hormonal and developmental responses. May regulate some stress-responsive genes. Seems to play a smaller developmental role than R. The polypeptide is Probable inactive poly [ADP-ribose] polymerase SRO1 (SRO1) (Arabidopsis thaliana (Mouse-ear cress)).